The sequence spans 366 residues: tRNA/tmRNA (uracil-C(5))-methyltransferase (366 aa).

S-adenosyl-L-methionine-binding residues include Gln190, Tyr218, Asn223, Glu239, and Asp299. The active-site Nucleophile is Cys324. Glu358 (proton acceptor) is an active-site residue.

This sequence belongs to the class I-like SAM-binding methyltransferase superfamily. RNA M5U methyltransferase family. TrmA subfamily.

The enzyme catalyses uridine(54) in tRNA + S-adenosyl-L-methionine = 5-methyluridine(54) in tRNA + S-adenosyl-L-homocysteine + H(+). It carries out the reaction uridine(341) in tmRNA + S-adenosyl-L-methionine = 5-methyluridine(341) in tmRNA + S-adenosyl-L-homocysteine + H(+). Dual-specificity methyltransferase that catalyzes the formation of 5-methyluridine at position 54 (m5U54) in all tRNAs, and that of position 341 (m5U341) in tmRNA (transfer-mRNA). The polypeptide is tRNA/tmRNA (uracil-C(5))-methyltransferase (Escherichia coli O81 (strain ED1a)).